Consider the following 434-residue polypeptide: Ribitol-5-phosphate xylosyltransferase 1 (434 aa).

The Cytoplasmic portion of the chain corresponds to 1–7 (MRFFRRK). A helical; Signal-anchor for type II membrane protein transmembrane segment spans residues 8 to 28 (IAIIVILAYAIFSLYAAYNVF). Residues 29-434 (FSKRVISRVH…VLEENFFKIT (406 aa)) lie on the Extracellular side of the membrane.

The protein belongs to the TMEM5 family.

It localises to the golgi apparatus membrane. It catalyses the reaction 3-O-[Rib-ol-P-Rib-ol-P-3-beta-D-GalNAc-(1-&gt;3)-beta-D-GlcNAc-(1-&gt;4)-(O-6-P-alpha-D-Man)]-Thr-[protein] + UDP-alpha-D-xylose = 3-O-[beta-D-Xyl-(1-&gt;4)-Rib-ol-P-Rib-ol-P-3-beta-D-GalNAc-(1-&gt;3)-beta-D-GlcNAc-(1-&gt;4)-(O-6-P-alpha-D-Man)]-Thr-[protein] + UDP + H(+). Its pathway is protein modification; protein glycosylation. Acts as a UDP-D-xylose:ribitol-5-phosphate beta1,4-xylosyltransferase, which catalyzes the transfer of UDP-D-xylose to ribitol 5-phosphate (Rbo5P) to form the Xylbeta1-4Rbo5P linkage on O-mannosyl glycan. Participates in the biosynthesis of the phosphorylated O-mannosyl trisaccharide (N-acetylgalactosamine-beta-3-N-acetylglucosamine-beta-4-(phosphate-6-)mannose), a carbohydrate structure present in alpha-dystroglycan (DAG1), which is required for binding laminin G-like domain-containing extracellular proteins with high affinity. This chain is Ribitol-5-phosphate xylosyltransferase 1 (rxylt1), found in Danio rerio (Zebrafish).